A 451-amino-acid chain; its full sequence is Tubulin gamma-1 chain (451 aa).

The residue at position 131 (S131) is a Phosphoserine; by BRSK1. Residue 142-148 (AGGTGSG) participates in GTP binding.

It belongs to the tubulin family. As to quaternary structure, component of the gamma-tubulin ring complex (gTuRC) consisting of TUBGCP2, TUBGCP3, TUBGCP4, TUBGCP5 and TUBGCP6 and gamma-tubulin TUBG1 or TUBG2. TUBGCP2, TUBGCP3, TUBGCP4, TUBGCP5 and TUBGCP6 assemble in a 5:5:2:1:1 stoichiometry; each is associated with a gamma-tubulin, thereby arranging 14 gamma-tubulins in a helical manner. Gamma-tubulin at the first position is blocked by TUBGCP3 at the last position, allowing 13 protafilaments to grow into a microtubule. The gTuRC (via TUBGCP3 and TUBGCP6) interacts with ACTB and MZT1; the interactions form a luminal bridge that stabilizes the initial structure during complex assembly. The gTuRC (via TUBGCP2) interacts with MZT2A/MZT2B and CDK5RAP2 (via CM1 motif); the interactions play a role in gTuRC activation. Interacts with alpha-beta tubulin heterodimers; the interaction allows microtubules to nucleate from the gTuRC. Interacts with B9D2. Interacts with CDK5RAP2; the interaction is leading to centrosomal localization of TUBG1 and CDK5RAP2. Interacts with CIMAP3. Interacts with SAS6 and NUP62 at the centrosome. Interacts with EML3 (phosphorylated at 'Thr-881') and HAUS8. Interacts with DNM2; this interaction may participate in centrosome cohesion. Interacts with CCDC66. Phosphorylation at Ser-131 by BRSK1 regulates centrosome duplication, possibly by mediating relocation of gamma-tubulin and its associated proteins from the cytoplasm to the centrosome.

The protein localises to the cytoplasm. It localises to the cytoskeleton. It is found in the microtubule organizing center. Its subcellular location is the centrosome. The protein resides in the spindle. Tubulin is the major constituent of microtubules, protein filaments consisting of alpha- and beta-tubulin heterodimers. Gamma-tubulin is a key component of the gamma-tubulin ring complex (gTuRC) which mediates microtubule nucleation. The gTuRC regulates the minus-end nucleation of alpha-beta tubulin heterodimers that grow into microtubule protafilaments, a critical step in centrosome duplication and spindle formation. In Mus musculus (Mouse), this protein is Tubulin gamma-1 chain.